Here is a 491-residue protein sequence, read N- to C-terminus: UDP-N-acetylmuramate--L-alanine ligase (491 aa).

An ATP-binding site is contributed by 126–132 (GTHGKTT).

The protein belongs to the MurCDEF family.

Its subcellular location is the cytoplasm. The catalysed reaction is UDP-N-acetyl-alpha-D-muramate + L-alanine + ATP = UDP-N-acetyl-alpha-D-muramoyl-L-alanine + ADP + phosphate + H(+). It participates in cell wall biogenesis; peptidoglycan biosynthesis. Its function is as follows. Cell wall formation. The protein is UDP-N-acetylmuramate--L-alanine ligase of Escherichia coli O7:K1 (strain IAI39 / ExPEC).